Consider the following 152-residue polypeptide: MFRGATLVNLDSKGRLAVPTRYREMLNGESQGQMVCTIDLHQPCLLLYPLPEWEIIEQKLSRLSSMNPAERRVQRLLLGHASECQMDSAGRLLIANTLRQHADLKKEVMLVGQFNKFELWDEQTWYQQVRDDIDAEQSTQEPLSDRLQDLSL.

2 SpoVT-AbrB domains span residues 5–52 (ATLV…PLPE) and 81–124 (ASEC…DEQT).

The protein belongs to the MraZ family. In terms of assembly, forms oligomers.

It is found in the cytoplasm. Its subcellular location is the nucleoid. Negatively regulates its own expression and that of the subsequent genes in the proximal part of the division and cell wall (dcw) gene cluster. Acts by binding directly to DNA. May also regulate the expression of genes outside the dcw cluster. The polypeptide is Transcriptional regulator MraZ (Pectobacterium carotovorum subsp. carotovorum (strain PC1)).